Consider the following 855-residue polypeptide: Receptor-like protein kinase THESEUS 1 (855 aa).

The N-terminal stretch at 1–22 (MVFTKSLLVLLWFLSCYTTTTS) is a signal peptide. Residues 23–415 (SALFNPPDNY…GGSGSKSKKK (393 aa)) are Extracellular-facing. N-linked (GlcNAc...) asparagine glycosylation is found at asparagine 41, asparagine 64, asparagine 75, asparagine 114, asparagine 118, asparagine 136, asparagine 143, asparagine 154, asparagine 168, asparagine 225, asparagine 242, asparagine 288, asparagine 353, and asparagine 376. The helical transmembrane segment at 416 to 436 (AVIIGSLVGAVTLILLIAVCC) threads the bilayer. Residues 437 to 855 (YCCLVASRKQ…FSQLVHPRGR (419 aa)) lie on the Cytoplasmic side of the membrane. The Protein kinase domain occupies 510 to 783 (FDESSLLGVG…GDVLWNLEYA (274 aa)). ATP-binding positions include 516-524 (LGVGGFGRV) and lysine 538. The Proton acceptor role is filled by aspartate 634. The interval 822–855 (IDRGGVNSGTGTDDDAEDATTSAVFSQLVHPRGR) is disordered.

It belongs to the protein kinase superfamily. Ser/Thr protein kinase family. In terms of processing, autophosphorylated. As to expression, expressed in most vegetative tissues, including leaves, stems and roots, primarily in expanding cells and vascular tissue.

Its subcellular location is the cell membrane. In terms of biological role, receptor-like protein kinase required for cell elongation during vegetative growth, mostly in a brassinosteroid-(BR-) independent manner. Mediates the response of growing plant cells to the perturbation of cellulose synthesis and may act as a cell-wall-integrity sensor. Controls ectopic-lignin accumulation in cellulose-deficient mutant backgrounds. The sequence is that of Receptor-like protein kinase THESEUS 1 (THE1) from Arabidopsis thaliana (Mouse-ear cress).